Consider the following 225-residue polypeptide: UPF0758 protein BCE_4545 (225 aa).

An MPN domain is found at 103–225; it reads SIRSPEDCAT…FVSLKEKGHI (123 aa). Zn(2+)-binding residues include histidine 174, histidine 176, and aspartate 187. Positions 174-187 match the JAMM motif motif; that stretch reads HNHPSGDPAPSRED.

It belongs to the UPF0758 family.

This chain is UPF0758 protein BCE_4545, found in Bacillus cereus (strain ATCC 10987 / NRS 248).